Consider the following 405-residue polypeptide: 4-hydroxy-3-methylbut-2-enyl diphosphate reductase (405 aa).

Cysteine 66 contributes to the [4Fe-4S] cluster binding site. Residue histidine 96 participates in (2E)-4-hydroxy-3-methylbut-2-enyl diphosphate binding. Histidine 96 serves as a coordination point for dimethylallyl diphosphate. Position 96 (histidine 96) interacts with isopentenyl diphosphate. Residue cysteine 157 participates in [4Fe-4S] cluster binding. A (2E)-4-hydroxy-3-methylbut-2-enyl diphosphate-binding site is contributed by histidine 185. Histidine 185 contacts dimethylallyl diphosphate. Histidine 185 contacts isopentenyl diphosphate. Glutamate 187 serves as the catalytic Proton donor. Threonine 250 serves as a coordination point for (2E)-4-hydroxy-3-methylbut-2-enyl diphosphate. Cysteine 288 provides a ligand contact to [4Fe-4S] cluster. Positions 317, 318, 319, and 380 each coordinate (2E)-4-hydroxy-3-methylbut-2-enyl diphosphate. Dimethylallyl diphosphate is bound by residues serine 317, serine 318, asparagine 319, and serine 380. 4 residues coordinate isopentenyl diphosphate: serine 317, serine 318, asparagine 319, and serine 380.

Belongs to the IspH family. It depends on [4Fe-4S] cluster as a cofactor.

It catalyses the reaction isopentenyl diphosphate + 2 oxidized [2Fe-2S]-[ferredoxin] + H2O = (2E)-4-hydroxy-3-methylbut-2-enyl diphosphate + 2 reduced [2Fe-2S]-[ferredoxin] + 2 H(+). The catalysed reaction is dimethylallyl diphosphate + 2 oxidized [2Fe-2S]-[ferredoxin] + H2O = (2E)-4-hydroxy-3-methylbut-2-enyl diphosphate + 2 reduced [2Fe-2S]-[ferredoxin] + 2 H(+). It participates in isoprenoid biosynthesis; dimethylallyl diphosphate biosynthesis; dimethylallyl diphosphate from (2E)-4-hydroxy-3-methylbutenyl diphosphate: step 1/1. The protein operates within isoprenoid biosynthesis; isopentenyl diphosphate biosynthesis via DXP pathway; isopentenyl diphosphate from 1-deoxy-D-xylulose 5-phosphate: step 6/6. Catalyzes the conversion of 1-hydroxy-2-methyl-2-(E)-butenyl 4-diphosphate (HMBPP) into a mixture of isopentenyl diphosphate (IPP) and dimethylallyl diphosphate (DMAPP). Acts in the terminal step of the DOXP/MEP pathway for isoprenoid precursor biosynthesis. The protein is 4-hydroxy-3-methylbut-2-enyl diphosphate reductase of Prochlorococcus marinus (strain SARG / CCMP1375 / SS120).